We begin with the raw amino-acid sequence, 138 residues long: Small ribosomal subunit protein uS11c (138 aa).

A disordered region spans residues 1-22; the sequence is MAKAIPKISSRRNGRISSRKGA. The span at 9–22 shows a compositional bias: basic residues; sequence SSRRNGRISSRKGA.

It belongs to the universal ribosomal protein uS11 family. In terms of assembly, part of the 30S ribosomal subunit.

It is found in the plastid. The protein localises to the chloroplast. In Solanum bulbocastanum (Wild potato), this protein is Small ribosomal subunit protein uS11c.